The sequence spans 380 residues: Probable inactive reductase easA (380 aa).

FMN-binding positions include Pro25 to Thr27, Ala60, Gln102, and His171. Residues His171 and Asn174 each coordinate substrate. Residues Lys223, Gly299, Gly324–Arg325, and Arg325 each bind FMN. Tyr352 contacts substrate.

Belongs to the NADH:flavin oxidoreductase/NADH oxidase family.

Its function is as follows. Probable inactive dehydrogenase; part of the gene cluster that mediates the biosynthesis of fungal ergot alkaloid ergovaline, the predominant ergopeptine product in E.festucae var. lolii. DmaW catalyzes the first step of ergot alkaloid biosynthesis by condensing dimethylallyl diphosphate (DMAP) and tryptophan to form 4-dimethylallyl-L-tryptophan. The second step is catalyzed by the methyltransferase easF that methylates 4-dimethylallyl-L-tryptophan in the presence of S-adenosyl-L-methionine, resulting in the formation of 4-dimethylallyl-L-abrine. The catalase easC and the FAD-dependent oxidoreductase easE then transform 4-dimethylallyl-L-abrine to chanoclavine-I which is further oxidized by easD in the presence of NAD(+), resulting in the formation of chanoclavine-I aldehyde. Agroclavine dehydrogenase easG then mediates the conversion of chanoclavine-I aldehyde to agroclavine via a non-enzymatic adduct reaction: the substrate is an iminium intermediate that is formed spontaneously from chanoclavine-I aldehyde in the presence of glutathione. The presence of easA is not required to complete this reaction. Further conversion of agroclavine to paspalic acid is a two-step process involving oxidation of agroclavine to elymoclavine and of elymoclavine to paspalic acid, the second step being performed by the elymoclavine oxidase cloA. Paspalic acid is then further converted to D-lysergic acid. Ergovaline is assembled from D-lysergic acid and three different amino acids by the D-lysergyl-peptide-synthetase composed of a monomudular (lpsB) and a trimodular (lpsA) nonribosomal peptide synthetase subunit. The chain is Probable inactive reductase easA from Epichloe festucae var. lolii (Neotyphodium lolii).